The primary structure comprises 255 residues: Developmental and secondary metabolism regulator MVE1 (255 aa).

The Velvet domain occupies 31-226; that stretch reads GRKLTYRMSV…AEQGCRVRIR (196 aa). The Nuclear localization signal signature appears at 45-50; that stretch reads VRARAC. Disordered stretches follow at residues 163 to 184 and 229 to 255; these read CKSP…DAHV and VRMR…QARA. Over residues 245–255 the composition is skewed to acidic residues; sequence NYEDETAQARA.

This sequence belongs to the velvet family. VeA subfamily. In terms of assembly, component of the heterotrimeric velvet complex composed of LAE1, MVE1 and VEL2; MVE1 acting as a bridging protein between LAE1 and VEL2.

Its subcellular location is the nucleus. The protein localises to the cytoplasm. Its function is as follows. Component of the velvet transcription factor complex that controls sexual/asexual developmental ratio in response to light, promoting sexual development in the darkness while stimulating asexual sporulation under illumination. The velvet complex hat acts as a global regulator for secondary metabolite gene expression. Controls the expression of the melanin gene cluster. Mediates the light-stimulated formation of aerial mycelia. This Zymoseptoria tritici (strain CBS 115943 / IPO323) (Speckled leaf blotch fungus) protein is Developmental and secondary metabolism regulator MVE1.